Here is a 229-residue protein sequence, read N- to C-terminus: Small ribosomal subunit protein uS3 (229 aa).

The KH type-2 domain occupies 39 to 107; sequence VRKFLEKKLK…PAQINIAEIR (69 aa).

This sequence belongs to the universal ribosomal protein uS3 family. Part of the 30S ribosomal subunit. Forms a tight complex with proteins S10 and S14.

In terms of biological role, binds the lower part of the 30S subunit head. Binds mRNA in the 70S ribosome, positioning it for translation. This is Small ribosomal subunit protein uS3 from Shewanella loihica (strain ATCC BAA-1088 / PV-4).